A 535-amino-acid polypeptide reads, in one-letter code: MPNKYIVVTGGVLSSVGKGTLVASIGMLLKRRGYNVTAVKIDPYINVDAGTMNPYMHGEVFVTEDGAETDLDLGHYERFMDVNMTKYNNITAGKVYFEVIKKEREGKYLGQTVQIIPHVTDQIKDMIRYASKINNAEITLVEIGGTVGDIESLPFLEAVRQLKLEEGEDNVIFVHIALVEYLSVTGELKTKPLQHSVQELRRIGIQPDFIVGRATLPLDDETRRKIALFTNVKVDHIVSSYDVETSYEVPIILESQKLVSKILSRLKLEDRQVDLTDWISFVNNIKGINSKKTINIALVGKYTKLKDSYISIKEAIYHASAYIGVRPKLIWIESTDLESDTKNLNEILGNVNGIIVLPGFGSRGAEGKIKAIKYAREHNIPFLGICFGFQLSIVEFARDVLGLSEANSTEINPNTKDPVITLLDEQKNVTQLGGTMRLGAQKIILKEGTIAYQLYGKKVVYERHRHRYEVNPKYVDILEDAGLVVSGISENGLVEIIELPSNKFFVATQAHPEFKSRPTNPSPIYLGFIRAVASL.

The segment at 1–268 is amidoligase domain; the sequence is MPNKYIVVTG…VSKILSRLKL (268 aa). Serine 14 is a CTP binding site. UTP is bound at residue serine 14. Position 15-20 (15-20) interacts with ATP; sequence SVGKGT. Tyrosine 55 serves as a coordination point for L-glutamine. Aspartate 72 is a binding site for ATP. Mg(2+) contacts are provided by aspartate 72 and glutamate 142. CTP contacts are provided by residues 149 to 151, 189 to 194, and lysine 225; these read DIE and KTKPLQ. UTP-binding positions include 189–194 and lysine 225; that span reads KTKPLQ. Valine 243 contacts ATP. Positions 302–535 constitute a Glutamine amidotransferase type-1 domain; that stretch reads YTKLKDSYIS…LGFIRAVASL (234 aa). An L-glutamine-binding site is contributed by glycine 359. The active-site Nucleophile; for glutamine hydrolysis is the cysteine 386. Residues 387-390, glutamate 410, and arginine 467 contribute to the L-glutamine site; that span reads FGFQ. Residues histidine 511 and glutamate 513 contribute to the active site.

Belongs to the CTP synthase family. As to quaternary structure, homotetramer in the presence of ATP and UTP. The enzyme dissociates into homodimers in the absence of substrate nucleotides.

The enzyme catalyses UTP + L-glutamine + ATP + H2O = CTP + L-glutamate + ADP + phosphate + 2 H(+). It carries out the reaction L-glutamine + H2O = L-glutamate + NH4(+). The catalysed reaction is UTP + NH4(+) + ATP = CTP + ADP + phosphate + 2 H(+). The protein operates within pyrimidine metabolism; CTP biosynthesis via de novo pathway; CTP from UDP: step 2/2. Its activity is regulated as follows. Allosterically activated by GTP, when glutamine is the substrate; GTP has no effect on the reaction when ammonia is the substrate. The allosteric effector GTP functions by stabilizing the protein conformation that binds the tetrahedral intermediate(s) formed during glutamine hydrolysis. Inhibited by the product CTP, via allosteric rather than competitive inhibition. Its function is as follows. Catalyzes the ATP-dependent amination of UTP to CTP with either L-glutamine or ammonia as the source of nitrogen. Regulates intracellular CTP levels through interactions with the four ribonucleotide triphosphates. The sequence is that of CTP synthase from Saccharolobus solfataricus (strain ATCC 35092 / DSM 1617 / JCM 11322 / P2) (Sulfolobus solfataricus).